The sequence spans 443 residues: MENAKMNSLIAQYPLVKDLVALQETTWFNPGTTSLAEGLPYVGLTEQDVQDAHARLSRFAPYLAKAFPETAATGGIIESELVAIPAMQKRLEKEYQQPISGQLLLKKDSHLPISGSIKARGGIYEVLAHAEKLALEAGLLTLEDDYSKLLSPEFKQFFSQYSIAVGSTGNLGLSIGIMSARIGFKVTVHMSADARAWKKAKLRSHGVTVVEYEQDYGVAVEEGRKAAQSDPNCFFIDDENSRTLFLGYSVAGQRLKAQFAEQGRIVDADNPLFVYLPCGVGGGPGGVAFGLKLAFGDHVHCFFAEPTHSPCMLLGVHTGLHDQISVQDIGIDNLTAADGLAVGRASGFVGRAMERLLDGFYTLSDQTMYDMLGWLAQEEGIRLEPSALAGMAGPQRVCASVSYQQMHGFSAEQLRNATHLVWATGGGMVPEEEMEQYLAKGRS.

Lys118 is subject to N6-(pyridoxal phosphate)lysine.

This sequence belongs to the serine/threonine dehydratase family. DsdA subfamily. Monomer. Requires pyridoxal 5'-phosphate as cofactor.

The catalysed reaction is D-serine = pyruvate + NH4(+). This Escherichia coli O17:K52:H18 (strain UMN026 / ExPEC) protein is D-serine dehydratase.